The chain runs to 694 residues: Elongation factor G (694 aa).

In terms of domain architecture, tr-type G spans 9–288; the sequence is DAIRNIGIMA…VIVKWLPSPL (280 aa). GTP contacts are provided by residues 18–25, 82–86, and 136–139; these read AHIDAGKT, DTPGH, and NKMD.

It belongs to the TRAFAC class translation factor GTPase superfamily. Classic translation factor GTPase family. EF-G/EF-2 subfamily.

Its subcellular location is the cytoplasm. Its function is as follows. Catalyzes the GTP-dependent ribosomal translocation step during translation elongation. During this step, the ribosome changes from the pre-translocational (PRE) to the post-translocational (POST) state as the newly formed A-site-bound peptidyl-tRNA and P-site-bound deacylated tRNA move to the P and E sites, respectively. Catalyzes the coordinated movement of the two tRNA molecules, the mRNA and conformational changes in the ribosome. This is Elongation factor G (fusA) from Chlamydia muridarum (strain MoPn / Nigg).